The primary structure comprises 205 residues: Molybdenum cofactor guanylyltransferase (205 aa).

Residues 14–16, K27, D77, and D107 each bind GTP; that span reads LAG. Residue D107 participates in Mg(2+) binding.

Belongs to the MobA family. In terms of assembly, monomer. Mg(2+) serves as cofactor.

It localises to the cytoplasm. The catalysed reaction is Mo-molybdopterin + GTP + H(+) = Mo-molybdopterin guanine dinucleotide + diphosphate. Transfers a GMP moiety from GTP to Mo-molybdopterin (Mo-MPT) cofactor (Moco or molybdenum cofactor) to form Mo-molybdopterin guanine dinucleotide (Mo-MGD) cofactor. The protein is Molybdenum cofactor guanylyltransferase of Burkholderia vietnamiensis (strain G4 / LMG 22486) (Burkholderia cepacia (strain R1808)).